A 177-amino-acid chain; its full sequence is Large ribosomal subunit protein uL6 (177 aa).

This sequence belongs to the universal ribosomal protein uL6 family. In terms of assembly, part of the 50S ribosomal subunit.

This protein binds to the 23S rRNA, and is important in its secondary structure. It is located near the subunit interface in the base of the L7/L12 stalk, and near the tRNA binding site of the peptidyltransferase center. This chain is Large ribosomal subunit protein uL6, found in Vibrio cholerae serotype O1 (strain ATCC 39315 / El Tor Inaba N16961).